The primary structure comprises 129 residues: L-ectoine synthase (129 aa).

The protein belongs to the ectoine synthase family.

It carries out the reaction (2S)-4-acetamido-2-aminobutanoate = L-ectoine + H2O. The protein operates within amine and polyamine biosynthesis; ectoine biosynthesis; L-ectoine from L-aspartate 4-semialdehyde: step 3/3. Its function is as follows. Catalyzes the circularization of gamma-N-acetyl-alpha,gamma-diaminobutyric acid (ADABA) to ectoine (1,4,5,6-tetrahydro-2-methyl-4-pyrimidine carboxylic acid), which is an excellent osmoprotectant. This chain is L-ectoine synthase, found in Desulfosudis oleivorans (strain DSM 6200 / JCM 39069 / Hxd3) (Desulfococcus oleovorans).